A 195-amino-acid polypeptide reads, in one-letter code: Large ribosomal subunit protein uL18 (195 aa).

The protein belongs to the universal ribosomal protein uL18 family. Part of the 50S ribosomal subunit. Contacts the 5S and 23S rRNAs.

This is one of the proteins that bind and probably mediate the attachment of the 5S RNA into the large ribosomal subunit, where it forms part of the central protuberance. This chain is Large ribosomal subunit protein uL18, found in Nanoarchaeum equitans (strain Kin4-M).